The following is a 1090-amino-acid chain: UPF0507 protein SCY_4172 (1090 aa).

Residues Phe289 to Asn436 form the VPS9 domain.

The protein belongs to the UPF0507 family.

In Saccharomyces cerevisiae (strain YJM789) (Baker's yeast), this protein is UPF0507 protein SCY_4172.